We begin with the raw amino-acid sequence, 176 residues long: RING-H2 finger protein ATL73 (176 aa).

Positions 1-16 are cleaved as a signal peptide; that stretch reads MARFLLATQATPTISA. A helical transmembrane segment spans residues 42–62; sequence VIILAALLCALICALGINSVL. The segment at 113-155 adopts an RING-type; atypical zinc-finger fold; the sequence is CLICLGDFVEGETVRVLPKCNHGFHVKCIDTWLLSHSSCPTCR.

Belongs to the RING-type zinc finger family. ATL subfamily.

It localises to the membrane. It catalyses the reaction S-ubiquitinyl-[E2 ubiquitin-conjugating enzyme]-L-cysteine + [acceptor protein]-L-lysine = [E2 ubiquitin-conjugating enzyme]-L-cysteine + N(6)-ubiquitinyl-[acceptor protein]-L-lysine.. The protein operates within protein modification; protein ubiquitination. The protein is RING-H2 finger protein ATL73 (ATL73) of Arabidopsis thaliana (Mouse-ear cress).